Reading from the N-terminus, the 209-residue chain is Putative 3-methyladenine DNA glycosylase (209 aa).

The segment at 189 to 209 (YISKTQPGPPPKKRKKGLESS) is disordered. Basic residues predominate over residues 199–209 (PKKRKKGLESS).

This sequence belongs to the DNA glycosylase MPG family.

The protein is Putative 3-methyladenine DNA glycosylase of Chlorobaculum tepidum (strain ATCC 49652 / DSM 12025 / NBRC 103806 / TLS) (Chlorobium tepidum).